A 183-amino-acid polypeptide reads, in one-letter code: Capsid protein (183 aa).

Residues 136-183 (NAPILSTLPETTVVRRRGRSPRRRTPSPRRRRSQSPRRRRSQSRESQC) form a disordered region. The span at 149-176 (VRRRGRSPRRRTPSPRRRRSQSPRRRRS) shows a compositional bias: basic residues. Phosphoserine; by host occurs at positions 155, 162, and 170. The 1; half-length repeat unit spans residues 155-161 (SPRRRTP). The 3 X 8 AA repeats of S-P-R-R-R-[PR]-S-Q stretch occupies residues 155 to 177 (SPRRRTPSPRRRRSQSPRRRRSQ). Residues 158–175 (RRTPSPRRRRSQSPRRRR) carry the Bipartite nuclear localization signal motif. 2 tandem repeats follow at residues 162-169 (SPRRRRSQ) and 170-177 (SPRRRRSQ). An RNA binding region spans residues 177–183 (QSRESQC).

It belongs to the orthohepadnavirus core antigen family. Homodimerizes, then multimerizes. Interacts with cytosol exposed regions of viral L glycoprotein present in the reticulum-to-Golgi compartment. Interacts with human FLNB. Phosphorylated form interacts with host importin alpha; this interaction depends on the exposure of the NLS, which itself depends upon genome maturation and/or phosphorylation of the capsid protein. Interacts with host NUP153. Post-translationally, phosphorylated by host SRPK1, SRPK2, and maybe protein kinase C or GAPDH. Phosphorylation is critical for pregenomic RNA packaging. Protein kinase C phosphorylation is stimulated by HBx protein and may play a role in transport of the viral genome to the nucleus at the late step during the viral replication cycle.

It localises to the virion. The protein localises to the host cytoplasm. Functionally, self assembles to form an icosahedral capsid. Most capsids appear to be large particles with an icosahedral symmetry of T=4 and consist of 240 copies of capsid protein, though a fraction forms smaller T=3 particles consisting of 180 capsid proteins. Entering capsids are transported along microtubules to the nucleus. Phosphorylation of the capsid is thought to induce exposure of nuclear localization signal in the C-terminal portion of the capsid protein that allows binding to the nuclear pore complex via the importin (karyopherin-) alpha and beta. Capsids are imported in intact form through the nuclear pore into the nuclear basket, where it probably binds NUP153. Only capsids that contain the mature viral genome can release the viral DNA and capsid protein into the nucleoplasm. Immature capsids get stuck in the basket. Capsids encapsulate the pre-genomic RNA and the P protein. Pre-genomic RNA is reverse-transcribed into DNA while the capsid is still in the cytoplasm. The capsid can then either be directed to the nucleus, providing more genomes for transcription, or bud through the endoplasmic reticulum to provide new virions. This chain is Capsid protein, found in Homo sapiens (Human).